The following is a 361-amino-acid chain: Palmitoyltransferase ZDHHC2 (361 aa).

Topologically, residues 1-15 are cytoplasmic; that stretch reads MAPSGSRSFDCWRVL. A helical membrane pass occupies residues 16 to 36; sequence YWIPVLFISLIVAWSYYAYVV. At 37–50 the chain is on the lumenal side; that stretch reads QLCIETIENMGEKT. The helical transmembrane segment at 51–71 threads the bilayer; that stretch reads VYLLIYHLLFLMFVWSYWQTI. Over 72 to 167 the chain is Cytoplasmic; the sequence is YSKPMNPLKE…NNCVGFANYK (96 aa). The region spanning 124 to 174 is the DHHC domain; sequence RYCDRCLLLKPDRCHHCSACDMCILKMDHHCPWVNNCVGFANYKFFMLFLA. C154 acts as the S-palmitoyl cysteine intermediate in catalysis. A helical membrane pass occupies residues 168–188; sequence FFMLFLAYSLLYCLFVTATDM. Residues 189 to 207 lie on the Lumenal side of the membrane; the sequence is QYFIQFWTNGLPDTQAKFH. The chain crosses the membrane as a helical span at residues 208–228; it reads IMFLFFAASTFSVSLAFLFAY. The Cytoplasmic segment spans residues 229–361; it reads HCWLVCKNRS…NPALTIEKET (133 aa). The tract at residues 296-361 is mediates localization to plasma membrane and recycling endosomes; the sequence is NPDPEQPSIP…NPALTIEKET (66 aa). A compositionally biased stretch (pro residues) spans 299 to 308; that stretch reads PEQPSIPPGR. The tract at residues 299–361 is disordered; sequence PEQPSIPPGR…NPALTIEKET (63 aa). The segment covering 331 to 340 has biased composition (polar residues); sequence SRLLNNGQTD. Residues 333–334 carry the Non-canonical dileucine endocytic signal motif; the sequence is LL. The short motif at 352–355 is the NPxY-like endocytic signal element; the sequence is NPAL.

The protein belongs to the DHHC palmitoyltransferase family. As to quaternary structure, monomer. Homodimer. The monomeric form has a higher catalytic activity. Post-translationally, autopalmitoylated.

The protein localises to the endoplasmic reticulum membrane. It localises to the golgi apparatus membrane. The protein resides in the postsynaptic density. It is found in the postsynaptic recycling endosome membrane. Its subcellular location is the cell membrane. The enzyme catalyses L-cysteinyl-[protein] + hexadecanoyl-CoA = S-hexadecanoyl-L-cysteinyl-[protein] + CoA. It carries out the reaction L-cysteinyl-[protein] + tetradecanoyl-CoA = S-tetradecanoyl-L-cysteinyl-[protein] + CoA. It catalyses the reaction L-cysteinyl-[protein] + octadecanoyl-CoA = S-octadecanoyl-L-cysteinyl-[protein] + CoA. In terms of biological role, palmitoyltransferase that catalyzes the addition of palmitate onto various protein substrates and is involved in a variety of cellular processes. Has no stringent fatty acid selectivity and in addition to palmitate can also transfer onto target proteins myristate from tetradecanoyl-CoA and stearate from octadecanoyl-CoA. The sequence is that of Palmitoyltransferase ZDHHC2 from Danio rerio (Zebrafish).